The sequence spans 504 residues: ATP synthase subunit alpha 2 (504 aa).

ATP is bound at residue 169-176 (GDRQTGKT).

The protein belongs to the ATPase alpha/beta chains family. F-type ATPases have 2 components, CF(1) - the catalytic core - and CF(0) - the membrane proton channel. CF(1) has five subunits: alpha(3), beta(3), gamma(1), delta(1), epsilon(1). CF(0) has three main subunits: a(1), b(2) and c(9-12). The alpha and beta chains form an alternating ring which encloses part of the gamma chain. CF(1) is attached to CF(0) by a central stalk formed by the gamma and epsilon chains, while a peripheral stalk is formed by the delta and b chains.

The protein resides in the cell membrane. The enzyme catalyses ATP + H2O + 4 H(+)(in) = ADP + phosphate + 5 H(+)(out). Its function is as follows. Produces ATP from ADP in the presence of a proton gradient across the membrane. The alpha chain is a regulatory subunit. This is ATP synthase subunit alpha 2 from Listeria monocytogenes serovar 1/2a (strain ATCC BAA-679 / EGD-e).